Reading from the N-terminus, the 647-residue chain is ATP-binding protein Uup (647 aa).

2 ABC transporter domains span residues 1 to 253 (MALI…RVEA) and 320 to 546 (FEME…AKAK). ATP-binding positions include 36-43 (GRNGAGKS) and 352-359 (GPNGCGKT). Positions 545 to 563 (AKKSEPLKEESAVKNDRTS) are enriched in basic and acidic residues. The tract at residues 545–569 (AKKSEPLKEESAVKNDRTSKPKSVK) is disordered. The C-terminal domain (CTD), binds DNA stretch occupies residues 559–647 (NDRTSKPKSV…EKKNLVEGKA (89 aa)).

Belongs to the ABC transporter superfamily. ABCF family. Uup subfamily.

The protein resides in the cytoplasm. The enzyme catalyses ATP + H2O = ADP + phosphate + H(+). Its function is as follows. Probably plays a role in ribosome assembly or function. May be involved in resolution of branched DNA intermediates that result from template switching in postreplication gaps. Binds DNA and has ATPase activity. In Haemophilus influenzae (strain ATCC 51907 / DSM 11121 / KW20 / Rd), this protein is ATP-binding protein Uup.